A 336-amino-acid polypeptide reads, in one-letter code: MPLCLKINKKHGEQTRRILIENNLLNKDYKITSEGNYLYLPIKDVDEDILKSILNIEFELVDKELEEKKIIKKPSFREIISKKYRKEIDEGLISLSYDVVGDLVILQISDEVDEKIRKEIGELAYKLIPCKGVFRRKSEVKGEFRVRELEHLAGENRTLTIHKENGYRLWVDIAKVYFSPRLGGERARIMKKVSLNDVVVDMFAGVGPFSIACKNAKKIYAIDINPHAIELLKKNIKLNKLEHKIIPILSDVREVDVKGNRVIMNLPKFAHKFIDKALDIVEEGGVIHYYTIGKDFDKAIKLFEKKCDCEVLEKRIVKSYAPREYILALDFKINKK.

Residues R186, 223-224, 251-252, and N265 contribute to the S-adenosyl-L-methionine site; these read DI and DV.

The protein belongs to the class I-like SAM-binding methyltransferase superfamily. TRM5/TYW2 family. As to quaternary structure, monomer.

The protein resides in the cytoplasm. It catalyses the reaction guanosine(37) in tRNA + S-adenosyl-L-methionine = N(1)-methylguanosine(37) in tRNA + S-adenosyl-L-homocysteine + H(+). Functionally, specifically methylates the N1 position of guanosine-37 in various tRNAs. The sequence is that of tRNA (guanine(37)-N(1))-methyltransferase Trm5b (trm5b) from Methanocaldococcus jannaschii (strain ATCC 43067 / DSM 2661 / JAL-1 / JCM 10045 / NBRC 100440) (Methanococcus jannaschii).